The chain runs to 263 residues: Pheophorbidase (263 aa).

The region spanning His-13–Phe-244 is the AB hydrolase-1 domain. Ser-88 serves as the catalytic Acyl-ester intermediate. Residues Asp-212 and His-240 each act as charge relay system in the active site.

Belongs to the AB hydrolase superfamily. Homodimer.

It is found in the cytoplasm. It carries out the reaction pheophorbide a + H2O + H(+) = pyropheophorbide a + methanol + CO2. Inhibited by methanol and phenylmethylsulfonicfluoride (PMSF). Functionally, involved in chlorophyll degradation. Specific for the pheophorbides of the dihydroporphyrin and tetrahydroporphyrin types. Chlorophyllide a, pheophytin a and the nonfluorescent chlorophyll catabolite (NCC) are not used as substrates. In Raphanus sativus (Radish), this protein is Pheophorbidase (PPD).